Reading from the N-terminus, the 277-residue chain is MALKKYKPITNGRRNMTSLDFAEITKTTPEKSLLQPLPKRAGRNNQGKLTVRHHGGGHKRQYRVIDFKRNKDGINAKVDSIQYDPNRSANIALLVYADGEKRYIIAPKNLKVGQVLESGEEADIKVGNALPLQFIPVGTVIHNIELKPGKGGQIARSAGASAQVLGKEGKYVLIRLRSGEVRMILSTCRATIGQVGNIQHELVNVGKAGRSRWKGIRPTVRGSVMNPNDHPHGGGEGRAPIGRPSPMSPWGKPTLGKKTRRGKKSSDKLIVRGRKKK.

Disordered stretches follow at residues P36–G55 and W213–K277.

The protein belongs to the universal ribosomal protein uL2 family. In terms of assembly, part of the 50S ribosomal subunit. Forms a bridge to the 30S subunit in the 70S ribosome.

One of the primary rRNA binding proteins. Required for association of the 30S and 50S subunits to form the 70S ribosome, for tRNA binding and peptide bond formation. It has been suggested to have peptidyltransferase activity; this is somewhat controversial. Makes several contacts with the 16S rRNA in the 70S ribosome. The protein is Large ribosomal subunit protein uL2 of Staphylococcus saprophyticus subsp. saprophyticus (strain ATCC 15305 / DSM 20229 / NCIMB 8711 / NCTC 7292 / S-41).